Here is a 363-residue protein sequence, read N- to C-terminus: Chemerin-like receptor 1 (363 aa).

Over 1 to 39 (MDFEDYNSTYEDSYTDDFDTIVALEEFSPLEGRVVRIFL) the chain is Extracellular. N7 carries an N-linked (GlcNAc...) asparagine glycan. Residues 40–60 (VVVYSIICFLGILGNGLVIVI) traverse the membrane as a helical segment. The Cytoplasmic portion of the chain corresponds to 61–71 (ATFKMKKTVNT). A helical transmembrane segment spans residues 72–92 (VWFLNLAVADFLFNVFLPIHI). Over 93–109 (AYAAMDYHWVFGTAMCK) the chain is Extracellular. Residues C108 and C185 are joined by a disulfide bond. Residues 110–130 (ISNFLLIHNMYTSVFLLTVIS) form a helical membrane-spanning segment. At 131–152 (FDRCISVLLPVWSQNHRSIRLA) the chain is on the cytoplasmic side. The chain crosses the membrane as a helical span at residues 153-173 (YMACVVIWVLAFFLSSPSLVF). Residues 174 to 220 (RDTAHLHGKISCFNNFSLSATSSSSWPTHPQMDTVGFGRQMVVTITR) are Extracellular-facing. A glycan (N-linked (GlcNAc...) asparagine) is linked at N188. The chain crosses the membrane as a helical span at residues 221–241 (FLCGFLVPVLIISACYFTIVY). Residues 242–256 (KLRRNRLAKTKKPFK) are Cytoplasmic-facing. Residues 257–277 (IIVTIIITFFLCWCPYHTLYL) traverse the membrane as a helical segment. The Extracellular portion of the chain corresponds to 278 to 283 (LELHHR). Residues 284 to 304 (AMPGSVFSLGVPLATAIAIAN) traverse the membrane as a helical segment. Topologically, residues 305-363 (SCMNPILYVFMGQDFKKFKVALFSRLVNALSEDTGHSSYPSHRSFTKMSSMNERETSML) are cytoplasmic. At S335 the chain carries Phosphoserine. Residues 337–363 (DTGHSSYPSHRSFTKMSSMNERETSML) are disordered. At T338 the chain carries Phosphothreonine. Residues 340-355 (HSSYPSHRSFTKMSSM) show a composition bias toward polar residues. 3 positions are modified to phosphoserine: S345, S348, and S354.

It belongs to the chemokine-like receptor (CMKLR) family. In terms of tissue distribution, predominantly expressed in spleen and temperately in adipose tissue.

Its subcellular location is the cell membrane. In terms of biological role, receptor for the chemoattractant adipokine chemerin/RARRES2 and for the omega-3 fatty acid derived molecule resolvin E1. Interaction with RARRES2 initiates activation of G proteins G(i)/G(o) and beta-arrestin pathways inducing cellular responses via second messenger pathways such as intracellular calcium mobilization, phosphorylation of MAP kinases MAPK1/MAPK3 (ERK1/2), TYRO3, MAPK14/P38MAPK and PI3K leading to multifunctional effects, like, reduction of immune responses, enhancing of adipogenesis and angionesis. Resolvin E1 down-regulates cytokine production in macrophages by reducing the activation of MAPK1/3 (ERK1/2) and NF-kappa-B. Positively regulates adipogenesis and adipocyte metabolism. This is Chemerin-like receptor 1 (CMLKR1) from Sus scrofa (Pig).